A 341-amino-acid polypeptide reads, in one-letter code: Serpentine receptor class beta-1 (341 aa).

7 helical membrane-spanning segments follow: residues 22 to 42, 66 to 86, 102 to 122, 141 to 161, 188 to 208, 240 to 260, and 279 to 299; these read AQFW…IFLL, FLFA…PLFI, GQLS…GFSI, LGPL…FTVF, CWIL…ILLV, LIVS…TIFI, and GVYI…IKAL.

Belongs to the nematode receptor-like protein srb family.

The protein localises to the membrane. The sequence is that of Serpentine receptor class beta-1 (srb-1) from Caenorhabditis elegans.